Consider the following 260-residue polypeptide: NH(3)-dependent NAD(+) synthetase (260 aa).

31-38 provides a ligand contact to ATP; the sequence is GLSGGLDS. Asp-37 contacts Mg(2+). Arg-112 serves as a coordination point for deamido-NAD(+). Thr-132 is a binding site for ATP. Glu-137 contacts Mg(2+). Positions 161 and 183 each coordinate ATP.

Belongs to the NAD synthetase family. Homodimer.

The enzyme catalyses deamido-NAD(+) + NH4(+) + ATP = AMP + diphosphate + NAD(+) + H(+). Its pathway is cofactor biosynthesis; NAD(+) biosynthesis; NAD(+) from deamido-NAD(+) (ammonia route): step 1/1. Functionally, catalyzes the ATP-dependent amidation of deamido-NAD to form NAD. Uses ammonia as a nitrogen source. The protein is NH(3)-dependent NAD(+) synthetase of Helicobacter acinonychis (strain Sheeba).